The primary structure comprises 257 residues: Protein-tyrosine-phosphatase IBR5 (257 aa).

One can recognise a Tyrosine-protein phosphatase domain in the interval 49–185 (FPSEILPEFL…LQEFEQGIFG (137 aa)). Cysteine 129 acts as the Phosphocysteine intermediate in catalysis. Residues 235–257 (QEFTFGATPPKPTTGGDIAMDGS) are disordered.

Belongs to the protein-tyrosine phosphatase family. Interacts with SKP1A/ASK1 and with MPK12. As to expression, expressed in root tips and vasculature, cotyledons, stems, leaves vasculature and hydathodes, flowers, siliques, and seeds.

Its subcellular location is the nucleus. The enzyme catalyses O-phospho-L-tyrosyl-[protein] + H2O = L-tyrosyl-[protein] + phosphate. Its function is as follows. Required for the transduction of auxin and abscisic acid (ABA) signaling pathways. Dephosphorylates and inactivates the MAP kinase MPK12. The chain is Protein-tyrosine-phosphatase IBR5 (IBR5) from Arabidopsis thaliana (Mouse-ear cress).